The following is a 205-amino-acid chain: Lipoprotein MlpB (205 aa).

An N-terminal signal peptide occupies residues 1 to 17 (MKIINILFCLLLIVLNS). A lipid anchor (N-palmitoyl cysteine) is attached at Cys-18. A lipid anchor (S-diacylglycerol cysteine) is attached at Cys-18.

Belongs to the Multicopy lipoprotein (Mlp) family.

Its subcellular location is the cell outer membrane. In terms of biological role, an outer membrane protein that may participate in pathogenesis. Some human Lyme disease patients have antibodies against this protein. The Mlp proteins probably undergo intragenic recombination, generating new alleles. The protein is Lipoprotein MlpB of Borreliella burgdorferi (strain ATCC 35210 / DSM 4680 / CIP 102532 / B31) (Borrelia burgdorferi).